A 117-amino-acid chain; its full sequence is Large ribosomal subunit protein uL18 (117 aa).

This sequence belongs to the universal ribosomal protein uL18 family. In terms of assembly, part of the 50S ribosomal subunit; part of the 5S rRNA/L5/L18/L25 subcomplex. Contacts the 5S and 23S rRNAs.

In terms of biological role, this is one of the proteins that bind and probably mediate the attachment of the 5S RNA into the large ribosomal subunit, where it forms part of the central protuberance. In Pectobacterium carotovorum subsp. carotovorum (strain PC1), this protein is Large ribosomal subunit protein uL18.